The primary structure comprises 112 residues: T cell receptor alpha variable 12-1 (112 aa).

The signal sequence occupies residues 1–20 (MISLRVLLVILWLQLSWVWS). The Ig-like domain maps to 23 to 112 (KEVEQDPGPF…DSATYLCVVN (90 aa)). N-linked (GlcNAc...) asparagine glycosylation is present at Asn43. A disulfide bridge connects residues Cys44 and Cys109.

In terms of assembly, alpha-beta TR is a heterodimer composed of an alpha and beta chain; disulfide-linked. The alpha-beta TR is associated with the transmembrane signaling CD3 coreceptor proteins to form the TR-CD3 (TcR or TCR). The assembly of alpha-beta TR heterodimers with CD3 occurs in the endoplasmic reticulum where a single alpha-beta TR heterodimer associates with one CD3D-CD3E heterodimer, one CD3G-CD3E heterodimer and one CD247 homodimer forming a stable octameric structure. CD3D-CD3E and CD3G-CD3E heterodimers preferentially associate with TR alpha and TR beta chains, respectively. The association of the CD247 homodimer is the last step of TcR assembly in the endoplasmic reticulum and is required for transport to the cell surface.

The protein resides in the cell membrane. Functionally, v region of the variable domain of T cell receptor (TR) alpha chain that participates in the antigen recognition. Alpha-beta T cell receptors are antigen specific receptors which are essential to the immune response and are present on the cell surface of T lymphocytes. Recognize peptide-major histocompatibility (MH) (pMH) complexes that are displayed by antigen presenting cells (APC), a prerequisite for efficient T cell adaptive immunity against pathogens. Binding of alpha-beta TR to pMH complex initiates TR-CD3 clustering on the cell surface and intracellular activation of LCK that phosphorylates the ITAM motifs of CD3G, CD3D, CD3E and CD247 enabling the recruitment of ZAP70. In turn ZAP70 phosphorylates LAT, which recruits numerous signaling molecules to form the LAT signalosome. The LAT signalosome propagates signal branching to three major signaling pathways, the calcium, the mitogen-activated protein kinase (MAPK) kinase and the nuclear factor NF-kappa-B (NF-kB) pathways, leading to the mobilization of transcription factors that are critical for gene expression and essential for T cell growth and differentiation. The T cell repertoire is generated in the thymus, by V-(D)-J rearrangement. This repertoire is then shaped by intrathymic selection events to generate a peripheral T cell pool of self-MH restricted, non-autoaggressive T cells. Post-thymic interaction of alpha-beta TR with the pMH complexes shapes TR structural and functional avidity. This chain is T cell receptor alpha variable 12-1, found in Homo sapiens (Human).